Reading from the N-terminus, the 237-residue chain is MOB kinase activator 2 (237 aa).

The interval 1–21 (MDWLMGKSKAKPNGKKPAAEE) is disordered. Cys78, Cys83, His157, and His162 together coordinate Zn(2+). Over residues 217-229 (GGSGDGAGSGGPG) the composition is skewed to gly residues. The interval 217–237 (GGSGDGAGSGGPGAQNHVKER) is disordered.

The protein belongs to the MOB1/phocein family. In terms of assembly, binds STK38 and STK38L. In terms of processing, phosphorylated.

The protein resides in the nucleus. Its subcellular location is the cytoplasm. The protein localises to the perinuclear region. In terms of biological role, stimulates the autophosphorylation and kinase activity of STK38 and STK38L. This Homo sapiens (Human) protein is MOB kinase activator 2 (MOB2).